The primary structure comprises 173 residues: MKVYEYDNSTEDQREDHDSGAVVSEAALNEIGVLAYHFDSVDDVNALAAERGYKNRDEVTISPSALGDIYEDKVKAFFHEHLHEDEEIRYILDGEGFFDVRSKDDSWVRIRLSKGDLIILPAGIYHRFTTDKNNYIKAMRLFQEDPKWTPLNRDPLVDENAYRKAYINSLPLA.

Residues methionine 1–glycine 20 are disordered. 4 residues coordinate Fe(2+): histidine 81, histidine 83, glutamate 87, and histidine 126. Residues histidine 81, histidine 83, glutamate 87, and histidine 126 each contribute to the Ni(2+) site.

It belongs to the acireductone dioxygenase (ARD) family. Fe(2+) serves as cofactor. It depends on Ni(2+) as a cofactor.

The protein localises to the cytoplasm. Its subcellular location is the nucleus. It catalyses the reaction 1,2-dihydroxy-5-(methylsulfanyl)pent-1-en-3-one + O2 = 4-methylsulfanyl-2-oxobutanoate + formate + 2 H(+). The catalysed reaction is 1,2-dihydroxy-5-(methylsulfanyl)pent-1-en-3-one + O2 = 3-(methylsulfanyl)propanoate + CO + formate + 2 H(+). The protein operates within amino-acid biosynthesis; L-methionine biosynthesis via salvage pathway; L-methionine from S-methyl-5-thio-alpha-D-ribose 1-phosphate: step 5/6. Catalyzes 2 different reactions between oxygen and the acireductone 1,2-dihydroxy-3-keto-5-methylthiopentene (DHK-MTPene) depending upon the metal bound in the active site. Fe-containing acireductone dioxygenase (Fe-ARD) produces formate and 2-keto-4-methylthiobutyrate (KMTB), the alpha-ketoacid precursor of methionine in the methionine recycle pathway. Ni-containing acireductone dioxygenase (Ni-ARD) produces methylthiopropionate, carbon monoxide and formate, and does not lie on the methionine recycle pathway. The sequence is that of Acireductone dioxygenase from Tuber melanosporum (strain Mel28) (Perigord black truffle).